The following is a 151-amino-acid chain: uncharacterized protein (151 aa).

The first 32 residues, 1–32 (MEEAEKAKRRSIELLNETRNCAYSSFVALAEA), serve as a signal peptide directing secretion. A helical membrane pass occupies residues 45–67 (AIGFAGGISGSGHICGALWGSIA).

It is found in the membrane. This is an uncharacterized protein from Archaeoglobus fulgidus (strain ATCC 49558 / DSM 4304 / JCM 9628 / NBRC 100126 / VC-16).